We begin with the raw amino-acid sequence, 109 residues long: Probable endoribonuclease MazF5 (109 aa).

The protein belongs to the PemK/MazF family. As to quaternary structure, forms a complex with cognate antitoxin MazE5.

Toxic component of a type II toxin-antitoxin (TA) system. Upon expression in M.smegmatis inhibits colony formation. Its toxic effect is neutralized by coexpression with cognate antitoxin MazE5. Probably an endoribonuclease. This is Probable endoribonuclease MazF5 (mazF5) from Mycobacterium tuberculosis (strain ATCC 25618 / H37Rv).